A 618-amino-acid chain; its full sequence is Mitochondrial Rho GTPase 1 (618 aa).

The Cytoplasmic portion of the chain corresponds to 1–592 (MKKDVRILLV…TQADLKSSTF (592 aa)). The Miro 1 domain occupies 2-168 (KKDVRILLVG…FYYAQKAVLH (167 aa)). Residues arginine 14, glycine 16, lysine 17, threonine 18, and serine 19 each contribute to the GTP site. Threonine 18 contacts Mg(2+). 2 residues coordinate Mg(2+): proline 35 and aspartate 57. GTP is bound at residue serine 59. Position 92 is an N6-acetyllysine (lysine 92). Residues asparagine 118, lysine 119, aspartate 121, alanine 149, and lysine 150 each contribute to the GTP site. Lysine 153 participates in a covalent cross-link: Glycyl lysine isopeptide (Lys-Gly) (interchain with G-Cter in ubiquitin). In terms of domain architecture, EF-hand 1 spans 184 to 219 (ACIKALTRIFKISDQDNDGTLNDAELNFFQRICFNT). Residues aspartate 197, aspartate 199, aspartate 201, threonine 203, and glutamate 208 each contribute to the Ca(2+) site. Residue lysine 235 forms a Glycyl lysine isopeptide (Lys-Gly) (interchain with G-Cter in ubiquitin) linkage. The region spanning 304–339 (HAYLFLQSTFDKHDLDRDCALSPDELKDLFKVFPYI) is the EF-hand 2 domain. Ca(2+) contacts are provided by aspartate 317, aspartate 319, aspartate 321, alanine 323, and glutamate 328. Positions 416–579 (RNVFRCNVIG…FVKLTTMAMY (164 aa)) constitute a Miro 2 domain. GTP-binding residues include asparagine 428, cysteine 429, glycine 430, lysine 431, serine 432, glycine 433, and lysine 447. Residue asparagine 428 coordinates Mg(2+). GDP contacts are provided by asparagine 428, cysteine 429, glycine 430, lysine 431, serine 432, glycine 433, lysine 447, lysine 454, serine 477, glutamate 478, lysine 528, aspartate 530, threonine 558, cysteine 559, and asparagine 560. Positions 528, 530, 558, and 559 each coordinate GTP. Residue lysine 572 forms a Glycyl lysine isopeptide (Lys-Gly) (interchain with G-Cter in ubiquitin) linkage. A helical; Anchor for type IV membrane protein transmembrane segment spans residues 593-615 (WLRASFGATVFAVLGFAMYKALL). Residues 616–618 (KQR) lie on the Mitochondrial intermembrane side of the membrane.

The protein belongs to the mitochondrial Rho GTPase family. In terms of assembly, homodimer. Interacts with the kinesin-binding proteins TRAK1/OIP106 and TRAK2/GRIF1, forming a link between mitochondria and the trafficking apparatus of the microtubules. Interacts with RAP1GDS1. Interacts with ARMCX1. Found in a complex with KIF5B, OGT, RHOT2 and TRAK1. Ubiquitinated by PRKN during mitophagy, leading to its degradation and enhancement of mitophagy. Deubiquitinated by USP30. In terms of processing, acetylation on Lys-92 decreases sensitivity of mitochondrial transport to elevated Ca(2+) levels, increases mitochondrial transport and promotes axon growth. Deacetylated by HDAC6 which blocks mitochondrial transport and mediates axon growth inhibition. In terms of tissue distribution, ubiquitously expressed. Expressed at high level in heart and skeletal muscle.

It is found in the mitochondrion outer membrane. The catalysed reaction is GTP + H2O = GDP + phosphate + H(+). It catalyses the reaction ATP + H2O = ADP + phosphate + H(+). The enzyme catalyses UTP + H2O = UDP + phosphate + H(+). Atypical mitochondrial nucleoside-triphosphatase (NTPase) involved in mitochondrial trafficking. Probably involved in control of anterograde transport of mitochondria and their subcellular distribution. Promotes mitochondrial fission during high calcium conditions. Can hydrolyze GTP, ATP and UTP. In Homo sapiens (Human), this protein is Mitochondrial Rho GTPase 1 (RHOT1).